We begin with the raw amino-acid sequence, 83 residues long: Acyl carrier protein (83 aa).

The 76-residue stretch at 2–77 (NEILSKIKSI…DANQYIKKYL (76 aa)) folds into the Carrier domain. Ser37 is subject to O-(pantetheine 4'-phosphoryl)serine.

The protein belongs to the acyl carrier protein (ACP) family. Post-translationally, 4'-phosphopantetheine is transferred from CoA to a specific serine of apo-ACP by AcpS. This modification is essential for activity because fatty acids are bound in thioester linkage to the sulfhydryl of the prosthetic group.

Its subcellular location is the cytoplasm. The protein operates within lipid metabolism; fatty acid biosynthesis. In terms of biological role, carrier of the growing fatty acid chain in fatty acid biosynthesis. The polypeptide is Acyl carrier protein (Karelsulcia muelleri (strain GWSS) (Sulcia muelleri)).